Reading from the N-terminus, the 163-residue chain is CASP-like protein 1C2 (163 aa).

At 1–7 the chain is on the cytoplasmic side; the sequence is MAKLHRL. The chain crosses the membrane as a helical span at residues 8–28; that stretch reads ISAVLRLAAAGAAAAAAVIMV. At 29 to 50 the chain is on the extracellular side; the sequence is TSHETTSLFGIEMEAKYSYTPS. Residues 51–71 traverse the membrane as a helical segment; sequence FVFFVVAFAVTFAYSLLAAVL. Over 72–80 the chain is Cytoplasmic; the sequence is VRPGTTASR. Residues 81 to 101 form a helical membrane-spanning segment; that stretch reads LVLLSDVTVGMLLTGAVAATG. Residues 102 to 129 lie on the Extracellular side of the membrane; it reads AISQVGKSGNEHAGWLPICAQVQAYCGH. The helical transmembrane segment at 130–150 threads the bilayer; the sequence is VMGALIAGFVSLLLYFLIIMY. Residues 151-163 are Cytoplasmic-facing; it reads SLHAVAEPLCSCH.

This sequence belongs to the Casparian strip membrane proteins (CASP) family. Homodimer and heterodimers.

The protein resides in the cell membrane. The sequence is that of CASP-like protein 1C2 from Zea mays (Maize).